The primary structure comprises 47 residues: MLQFLLGFTLGNVVGMYLAQNYDIPNLAKKLEEIKKDLDAKKKPPSA.

A helical membrane pass occupies residues 7–23; sequence GFTLGNVVGMYLAQNYD.

The protein belongs to the STMP1 family. As to quaternary structure, interacts with components of the ubiquinol-cytochrome c oxidoreductase (cytochrome b-c1 complex, complex III, CIII), such as UQCRC1/QCR1, UQCRC2/QCR2 and UQCR10/QCR9. Interacts with components of the cytochrome c oxidase (mitochondrial respiratory chain complex IV) complex, such as MT-CO2. As to expression, expressed in monocytes and dendritic cells.

It is found in the mitochondrion inner membrane. The protein localises to the mitochondrion outer membrane. Its subcellular location is the mitochondrion intermembrane space. Functionally, microprotein involved in mitochondrial respiratory chain complex III (ubiquinol-cytochrome c oxidoreductase) and complex IV (mitochondrial cytochrome c oxidase complex) assembly. Required for the formation of mitochondrial supercomplexes (SCs). Also required for the activation of the NLRP3 inflammasome. In Homo sapiens (Human), this protein is Short transmembrane mitochondrial protein 1.